Here is a 213-residue protein sequence, read N- to C-terminus: Holliday junction branch migration complex subunit RuvA (213 aa).

The domain I stretch occupies residues 1-64; sequence MIARLVGFLV…EDSITLFGFA (64 aa). The interval 65-143 is domain II; it reads SYLERDWFRL…AIALFSSAKG (79 aa). A flexible linker region spans residues 144-159; sequence DHLAVEDISQPAASAH. The segment at 160–213 is domain III; that stretch reads HAGNFMADAVSALLNLGFKPAEAQRVVQLASEELGDQATLDSLVRLALRLSSKH.

Belongs to the RuvA family. In terms of assembly, homotetramer. Forms an RuvA(8)-RuvB(12)-Holliday junction (HJ) complex. HJ DNA is sandwiched between 2 RuvA tetramers; dsDNA enters through RuvA and exits via RuvB. An RuvB hexamer assembles on each DNA strand where it exits the tetramer. Each RuvB hexamer is contacted by two RuvA subunits (via domain III) on 2 adjacent RuvB subunits; this complex drives branch migration. In the full resolvosome a probable DNA-RuvA(4)-RuvB(12)-RuvC(2) complex forms which resolves the HJ.

It is found in the cytoplasm. Functionally, the RuvA-RuvB-RuvC complex processes Holliday junction (HJ) DNA during genetic recombination and DNA repair, while the RuvA-RuvB complex plays an important role in the rescue of blocked DNA replication forks via replication fork reversal (RFR). RuvA specifically binds to HJ cruciform DNA, conferring on it an open structure. The RuvB hexamer acts as an ATP-dependent pump, pulling dsDNA into and through the RuvAB complex. HJ branch migration allows RuvC to scan DNA until it finds its consensus sequence, where it cleaves and resolves the cruciform DNA. This is Holliday junction branch migration complex subunit RuvA from Zymomonas mobilis subsp. mobilis (strain ATCC 31821 / ZM4 / CP4).